The primary structure comprises 217 residues: UPF0502 protein KPN78578_10500 (217 aa).

It belongs to the UPF0502 family.

The polypeptide is UPF0502 protein KPN78578_10500 (Klebsiella pneumoniae subsp. pneumoniae (strain ATCC 700721 / MGH 78578)).